The sequence spans 261 residues: Small ribosomal subunit protein eS1 (261 aa).

Residues 1–18 show a composition bias toward basic residues; it reads MAVGKNKRISKGKKGGKK. The disordered stretch occupies residues 1–22; the sequence is MAVGKNKRISKGKKGGKKKAAD.

This sequence belongs to the eukaryotic ribosomal protein eS1 family. As to quaternary structure, component of the small ribosomal subunit. Mature ribosomes consist of a small (40S) and a large (60S) subunit. The 40S subunit contains about 33 different proteins and 1 molecule of RNA (18S). The 60S subunit contains about 49 different proteins and 3 molecules of RNA (25S, 5.8S and 5S).

It localises to the cytoplasm. The chain is Small ribosomal subunit protein eS1 from Cicer arietinum (Chickpea).